The following is a 66-amino-acid chain: DNA gyrase inhibitor YacG (66 aa).

4 residues coordinate Zn(2+): Cys-9, Cys-12, Cys-28, and Cys-32. A disordered region spans residues 45-66 (HKIAGAEESEDELYSGDLEPRH).

It belongs to the DNA gyrase inhibitor YacG family. As to quaternary structure, interacts with GyrB. Zn(2+) serves as cofactor.

Functionally, inhibits all the catalytic activities of DNA gyrase by preventing its interaction with DNA. Acts by binding directly to the C-terminal domain of GyrB, which probably disrupts DNA binding by the gyrase. This Pseudomonas entomophila (strain L48) protein is DNA gyrase inhibitor YacG.